Reading from the N-terminus, the 911-residue chain is Chromatin assembly factor 1 subunit A (911 aa).

The interval 1–31 (MLEEPEAATRTAAAVDCKDRPGFPVKRLIQA) is binds PCNA. The tract at residues 166–200 (HMEEEPGSPGDPKRTGDCQAGSLQSCPELTPGSRT) is disordered. A binds CBX1 and CBX3 chromo shadow domains region spans residues 176–327 (DPKRTGDCQA…LHRDREQQRE (152 aa)). Residues 186–200 (GSLQSCPELTPGSRT) are compositionally biased toward polar residues. S190 and S208 each carry phosphoserine. The short motif at 217 to 230 (FIEKVPVVVLEDIL) is the PxVxL motif element. 2 disordered regions span residues 250–408 (SESE…EEEK) and 578–618 (DSDD…VPHG). Residues 265–281 (LSHSSTNSSSPTSSPEG) are compositionally biased toward low complexity. S293 carries the post-translational modification Phosphoserine. Basic and acidic residues predominate over residues 310–408 (STEKGRSKLH…EEKRLREEEK (99 aa)). Composition is skewed to acidic residues over residues 578 to 589 (DSDDEWEEEEPG) and 597 to 612 (GDED…EDDG). Residues 621-657 (SEDEGVTEECADPENHKVHQKLKAKEWDELLAKGKRF) form a necessary for homodimerization and competence for chromatin assembly region. Residues 639 to 911 (HQKLKAKEWD…APIPAPTLCK (273 aa)) form a binds to p60 region. The residue at position 776 (S776) is a Phosphoserine. Disordered regions lie at residues 819–843 (PSAP…MLLK) and 866–886 (GSGD…DDTD). Residues 827 to 839 (GSASTEGPGQSTP) show a composition bias toward polar residues. T838 carries the post-translational modification Phosphothreonine. The span at 876–886 (DTEEDEEDDTD) shows a compositional bias: acidic residues.

This sequence belongs to the CHAF1A family. In terms of assembly, homodimer. Part of the CAF-1 complex that contains RBBP4, CHAF1B and CHAF1A. CHAF1A binds directly to CHAF1B. Only minor amounts of RBBP4 are complexed with CHAF1A and CHAF1B in G1 phase. Interacts with PCNA; the interaction is direct. Interacts (via the PxVxL motif) with CBX5; the interaction is direct. Interacts with MBD1. Interacts with histones H3.1, H3.2 and H3.1t.

Its subcellular location is the nucleus. In terms of biological role, acts as a component of the histone chaperone complex chromatin assembly factor 1 (CAF-1), which assembles histone octamers onto DNA during replication and repair. CAF-1 performs the first step of the nucleosome assembly process, bringing newly synthesized histones H3 and H4 to replicating DNA; histones H2A/H2B can bind to this chromatin precursor subsequent to DNA replication to complete the histone octamer. It may play a role in heterochromatin maintenance in proliferating cells by bringing newly synthesized cbx proteins to heterochromatic DNA replication foci. In Mus musculus (Mouse), this protein is Chromatin assembly factor 1 subunit A.